The following is a 370-amino-acid chain: tRNA-specific 2-thiouridylase MnmA (370 aa).

ATP-binding positions include A19 to S26 and L45. C113 (nucleophile) is an active-site residue. C113 and C209 are oxidised to a cystine. ATP is bound at residue G137. The tract at residues K159–Q161 is interaction with tRNA. C209 (cysteine persulfide intermediate) is an active-site residue.

This sequence belongs to the MnmA/TRMU family.

The protein localises to the cytoplasm. It catalyses the reaction S-sulfanyl-L-cysteinyl-[protein] + uridine(34) in tRNA + AH2 + ATP = 2-thiouridine(34) in tRNA + L-cysteinyl-[protein] + A + AMP + diphosphate + H(+). Catalyzes the 2-thiolation of uridine at the wobble position (U34) of tRNA, leading to the formation of s(2)U34. The sequence is that of tRNA-specific 2-thiouridylase MnmA from Rickettsia conorii (strain ATCC VR-613 / Malish 7).